The chain runs to 252 residues: Proteasome subunit alpha type-3 (252 aa).

Belongs to the peptidase T1A family. As to quaternary structure, the 26S proteasome consists of a 20S proteasome core and two 19S regulatory subunits. The 20S proteasome core is composed of 28 subunits that are arranged in four stacked rings, resulting in a barrel-shaped structure. The two end rings are each formed by seven alpha subunits, and the two central rings are each formed by seven beta subunits. The catalytic chamber with the active sites is on the inside of the barrel.

It localises to the cytoplasm. The protein localises to the nucleus. Functionally, the proteasome is a multicatalytic proteinase complex which is characterized by its ability to cleave peptides with Arg, Phe, Tyr, Leu, and Glu adjacent to the leaving group at neutral or slightly basic pH. The proteasome has an ATP-dependent proteolytic activity. The polypeptide is Proteasome subunit alpha type-3 (Acanthamoeba castellanii (Amoeba)).